The primary structure comprises 108 residues: UPF0235 protein RPB_0109 (108 aa).

This sequence belongs to the UPF0235 family.

The protein is UPF0235 protein RPB_0109 of Rhodopseudomonas palustris (strain HaA2).